We begin with the raw amino-acid sequence, 740 residues long: Elongation factor 2 (740 aa).

Positions 23–264 (AQIRNAGTLA…MIIEHVPPPN (242 aa)) constitute a tr-type G domain. GTP-binding positions include 32–39 (AHVDHGKT), 98–102 (DTPGH), and 152–155 (NKID). His-605 carries the diphthamide modification.

The protein belongs to the TRAFAC class translation factor GTPase superfamily. Classic translation factor GTPase family. EF-G/EF-2 subfamily.

It localises to the cytoplasm. Its function is as follows. Catalyzes the GTP-dependent ribosomal translocation step during translation elongation. During this step, the ribosome changes from the pre-translocational (PRE) to the post-translocational (POST) state as the newly formed A-site-bound peptidyl-tRNA and P-site-bound deacylated tRNA move to the P and E sites, respectively. Catalyzes the coordinated movement of the two tRNA molecules, the mRNA and conformational changes in the ribosome. The chain is Elongation factor 2 from Pyrobaculum neutrophilum (strain DSM 2338 / JCM 9278 / NBRC 100436 / V24Sta) (Thermoproteus neutrophilus).